Reading from the N-terminus, the 384-residue chain is Spermidine/putrescine import ATP-binding protein PotA (384 aa).

Residues 6 to 238 form the ABC transporter domain; the sequence is ITFNNVSKTF…PINHFVANFI (233 aa). 40–47 lines the ATP pocket; it reads GASGSGKS.

Belongs to the ABC transporter superfamily. Spermidine/putrescine importer (TC 3.A.1.11.1) family. The complex is composed of two ATP-binding proteins (PotA), two transmembrane proteins (PotB and PotC) and a solute-binding protein (PotD).

Its subcellular location is the cell membrane. It carries out the reaction ATP + H2O + polyamine-[polyamine-binding protein]Side 1 = ADP + phosphate + polyamineSide 2 + [polyamine-binding protein]Side 1.. Functionally, part of the ABC transporter complex PotABCD involved in spermidine/putrescine import. Responsible for energy coupling to the transport system. This chain is Spermidine/putrescine import ATP-binding protein PotA, found in Streptococcus pyogenes serotype M28 (strain MGAS6180).